A 249-amino-acid polypeptide reads, in one-letter code: Isoamyl acetate-hydrolyzing esterase 1 homolog (249 aa).

Catalysis depends on Ser-24, which acts as the Nucleophile. N6-succinyllysine is present on Lys-63. The active-site Proton donor is the Asp-197. The active-site Proton acceptor is His-200.

Belongs to the 'GDSL' lipolytic enzyme family. IAH1 subfamily.

In terms of biological role, probable lipase. In Rattus norvegicus (Rat), this protein is Isoamyl acetate-hydrolyzing esterase 1 homolog (Iah1).